The following is a 116-amino-acid chain: Putative superoxide reductase (116 aa).

Residues His-20, His-46, His-52, Cys-101, and His-104 each contribute to the Fe cation site.

Belongs to the desulfoferrodoxin family. Requires Fe cation as cofactor.

It catalyses the reaction reduced [rubredoxin] + superoxide + 2 H(+) = oxidized [rubredoxin] + H2O2. Uses electrons from reduced NADP, by way of rubredoxin and an oxidoreductase, to catalyze the reduction of superoxide to hydrogen peroxide. The chain is Putative superoxide reductase from Methanocaldococcus jannaschii (strain ATCC 43067 / DSM 2661 / JAL-1 / JCM 10045 / NBRC 100440) (Methanococcus jannaschii).